We begin with the raw amino-acid sequence, 66 residues long: Large ribosomal subunit protein bL33c (66 aa).

The protein belongs to the bacterial ribosomal protein bL33 family.

The protein localises to the plastid. Its subcellular location is the chloroplast. In Cryptomeria japonica (Japanese cedar), this protein is Large ribosomal subunit protein bL33c.